The following is a 314-amino-acid chain: MSKKAEEIQAKQSLEKENSNFSKTGYSNSRLNRHIMYTPEPKLHFDAMTIVGNLNKNNAHKLSEFMSIAPQIRLWDILQTKFKAKALQEKVYIEYDKVKADAWDRRNMRVEFNPNKLTHEEMLWLKQNIIDYMEDDGFTRLDLAFDFEDDLSDYYAMTDKSVKKTIFYGRNGKPETKYFGVRDSDRFIRIYNKKQERKDNADIEVMSEHLWRVEIELKRDMVDYWNDCFNDLHILKPDWSSLEKVKDQAMIYMLIHEESTWGKLERRTKNKYREMLKSISEIDLTDLMKLTLKENEKQLQKQIEFWQREFRFWE.

A compositionally biased stretch (basic and acidic residues) spans 1-18 (MSKKAEEIQAKQSLEKEN). The interval 1–25 (MSKKAEEIQAKQSLEKENSNFSKTG) is disordered.

The protein belongs to the plasmid replication initiation factor family.

In terms of biological role, this protein is probably a specific topoisomerase involved in initiating replication. This protein is specifically required and may be rate-limiting for replication of the plasmid in vivo. The chain is Replication initiation protein (repE) from Staphylococcus aureus.